A 526-amino-acid chain; its full sequence is Exodeoxyribonuclease 7 large subunit (526 aa).

The disordered stretch occupies residues 497-526 (AMTTEGGTPPGGAKKRSTKPAEPTKQGSLF).

Belongs to the XseA family. Heterooligomer composed of large and small subunits.

It is found in the cytoplasm. The catalysed reaction is Exonucleolytic cleavage in either 5'- to 3'- or 3'- to 5'-direction to yield nucleoside 5'-phosphates.. Its function is as follows. Bidirectionally degrades single-stranded DNA into large acid-insoluble oligonucleotides, which are then degraded further into small acid-soluble oligonucleotides. The sequence is that of Exodeoxyribonuclease 7 large subunit from Rhizobium etli (strain ATCC 51251 / DSM 11541 / JCM 21823 / NBRC 15573 / CFN 42).